We begin with the raw amino-acid sequence, 281 residues long: Glycerol uptake facilitator protein (281 aa).

Residues 1-5 (MSQTS) lie on the Cytoplasmic side of the membrane. A helical membrane pass occupies residues 6-34 (TLKGQCIAEFLGTGLLIFFGVGCVAALKV). At 35 to 39 (AGASF) the chain is on the periplasmic side. A helical transmembrane segment spans residues 40 to 60 (GQWEISVIWGLGVAMAIYLTA). Residues 61–63 (GVS) lie on the Cytoplasmic side of the membrane. Residues 64–67 (GAHL) lie within the membrane without spanning it. Positions 68 to 70 (NPA) match the NPA 1 motif. An intramembrane region (helical) is located at residues 68 to 78 (NPAVTIALWLF). Residues 79-84 (ACFDKR) are Cytoplasmic-facing. Residues 85–108 (KVIPFIVSQVAGAFCAAALVYGLY) form a helical membrane-spanning segment. Over 109–143 (YNLFFDFEQTHHIVRGSVESVDLAGTFSTYPNPHI) the chain is Periplasmic. The chain crosses the membrane as a helical span at residues 144 to 169 (NFVQAFAVEMVITAILMGLILALTDD). Over 170–177 (GNGVPRGP) the chain is Cytoplasmic. The helical transmembrane segment at 178–194 (LAPLLIGLLIAVIGASM) threads the bilayer. The Periplasmic portion of the chain corresponds to 195-198 (GPLT). An intramembrane segment occupies 199 to 202 (GFAM). Positions 203–205 (NPA) match the NPA 2 motif. An intramembrane region (helical) is located at residues 203–216 (NPARDFGPKVFAWL). Over 217 to 231 (AGWGNVAFTGGRDIP) the chain is Periplasmic. Residues 232-254 (YFLVPLFGPIVGAIVGAFAYRKL) traverse the membrane as a helical segment. At 255–281 (IGRHLPCDICVVEEKETTTPSEQKASL) the chain is on the cytoplasmic side.

This sequence belongs to the MIP/aquaporin (TC 1.A.8) family. In terms of assembly, homotetramer.

It is found in the cell inner membrane. It carries out the reaction glycerol(in) = glycerol(out). Its function is as follows. Mediates glycerol diffusion across the cytoplasmic membrane via a pore-type mechanism. The protein is Glycerol uptake facilitator protein (glpF) of Escherichia coli O157:H7.